The sequence spans 154 residues: Endoribonuclease YbeY (154 aa).

The Zn(2+) site is built by His-117, His-121, and His-127.

The protein belongs to the endoribonuclease YbeY family. Zn(2+) serves as cofactor.

The protein localises to the cytoplasm. Its function is as follows. Single strand-specific metallo-endoribonuclease involved in late-stage 70S ribosome quality control and in maturation of the 3' terminus of the 16S rRNA. This Mycoplasma pneumoniae (strain ATCC 29342 / M129 / Subtype 1) (Mycoplasmoides pneumoniae) protein is Endoribonuclease YbeY.